A 394-amino-acid polypeptide reads, in one-letter code: Choline/ethanolamine kinase (394 aa).

Positions 1–42 (MAADGTGVVGGGAVGGGLPKDGLQDAKCPEPIPNRRRASSLS) are disordered. Ala-2 is subject to N-acetylalanine. The segment covering 7 to 19 (GVVGGGAVGGGLP) has biased composition (gly residues). ATP-binding positions include 75-81 (SGGLSNL), Arg-104, 146-152 (QYLPSRP), Gln-244, and Asp-264. 77–79 (GLS) is a binding site for substrate.

It belongs to the choline/ethanolamine kinase family. In terms of assembly, homodimer, and heterodimer with CHKA. In terms of tissue distribution, expressed ubiquitously with the highest level in testis.

It catalyses the reaction choline + ATP = phosphocholine + ADP + H(+). The enzyme catalyses ethanolamine + ATP = phosphoethanolamine + ADP + H(+). It participates in phospholipid metabolism; phosphatidylethanolamine biosynthesis; phosphatidylethanolamine from ethanolamine: step 1/3. Functionally, has a key role in phospholipid metabolism, and catalyzes the first step of phosphatidylethanolamine and phosphatidylcholine biosynthesis. This chain is Choline/ethanolamine kinase (Chkb), found in Mus musculus (Mouse).